A 197-amino-acid chain; its full sequence is Nucleoside triphosphate pyrophosphatase (197 aa).

D72 serves as the catalytic Proton acceptor.

It belongs to the Maf family. It depends on a divalent metal cation as a cofactor.

The protein resides in the cytoplasm. The catalysed reaction is a ribonucleoside 5'-triphosphate + H2O = a ribonucleoside 5'-phosphate + diphosphate + H(+). It carries out the reaction a 2'-deoxyribonucleoside 5'-triphosphate + H2O = a 2'-deoxyribonucleoside 5'-phosphate + diphosphate + H(+). Its function is as follows. Nucleoside triphosphate pyrophosphatase. May have a dual role in cell division arrest and in preventing the incorporation of modified nucleotides into cellular nucleic acids. This Corynebacterium glutamicum (strain ATCC 13032 / DSM 20300 / JCM 1318 / BCRC 11384 / CCUG 27702 / LMG 3730 / NBRC 12168 / NCIMB 10025 / NRRL B-2784 / 534) protein is Nucleoside triphosphate pyrophosphatase.